Consider the following 147-residue polypeptide: Hemoglobin subunit beta-1 (147 aa).

A Globin domain is found at 3–147 (HWTDFERSTI…VVFSLGKQYH (145 aa)). Heme b contacts are provided by histidine 64 and histidine 93.

The protein belongs to the globin family. In terms of assembly, hb1 is a heterotetramer of two alpha-1 chains and two beta-1 chains. As to expression, red blood cells.

Functionally, involved in oxygen transport from gills to the various peripheral tissues. In Liparis tunicatus (Kelp snailfish), this protein is Hemoglobin subunit beta-1.